The sequence spans 514 residues: Embryonic protein UVS.2 (514 aa).

Residues 1 to 19 form the signal peptide; that stretch reads MDVKISAILLACIIQYAVS. Residues 90–286 form the Peptidase M12A domain; that stretch reads SAINDARFLW…SKINKLYECN (197 aa). N112 carries an N-linked (GlcNAc...) asparagine glycan. Cystine bridges form between C137/C285, C158/C178, C288/C314, C340/C363, C402/C428, and C455/C475. Residue H186 coordinates Zn(2+). E187 is a catalytic residue. Positions 190 and 196 each coordinate Zn(2+). N-linked (GlcNAc...) asparagine glycosylation is present at N199. CUB domains follow at residues 288 to 400 and 402 to 513; these read CSNL…YGSI and CGGA…YTFV. 3 N-linked (GlcNAc...) asparagine glycosylation sites follow: N421, N427, and N464.

Zn(2+) is required as a cofactor.

The chain is Embryonic protein UVS.2 from Xenopus laevis (African clawed frog).